We begin with the raw amino-acid sequence, 502 residues long: Protein MGF 505-5R (502 aa).

This sequence belongs to the asfivirus MGF 505 family.

Functionally, plays a role in virus cell tropism, and may be required for efficient virus replication in macrophages. This is Protein MGF 505-5R from African swine fever virus (isolate Tick/Malawi/Lil 20-1/1983) (ASFV).